We begin with the raw amino-acid sequence, 713 residues long: Oligopeptidase PhomG (713 aa).

Zn(2+) is bound at residue H461. E462 is a catalytic residue. Positions 465 and 468 each coordinate Zn(2+).

This sequence belongs to the peptidase M3 family. As to quaternary structure, monomer. It depends on Zn(2+) as a cofactor.

The protein operates within mycotoxin biosynthesis. Oligopeptidase; part of the gene cluster that mediates the biosynthesis of the phomopsins, a group of hexapeptide mycotoxins which infects lupins and causes lupinosis disease in livestock. Within the pathway, phomG and phomG' are probably involved in the processing of the phomA and phomA' precursors. The pathway starts with the processing of the precursor phomA by several endopeptidases including kexin proteases as well as the cluster-specific S41 family peptidase phomP1 and the oligopeptidase phomG to produce 10 identical copies of the hexapeptide Tyr-Val-Ile-Pro-Ile-Asp. After being excised from the precursor peptide, the core peptides are cyclized and modified post-translationally by enzymes encoded within the gene cluster. The timing and order of proteolysis of the phomA precursor and PTMs are still unknown. Two tyrosinase-like enzymes, phomQ1 and phomQ2, catalyze the chlorination and hydroxylation of Tyr, respectively. PhomYb, is proposed to be involved in the construction of the macrocyclic structure. The other 4 ustYa family proteins may be involved in PTMs that generate the unique structure of phomopsin A. PhomYa is required for the hydroxylation of C-beta of Tyr. PhomYc, phomYd, and phomYe are responsible for the biosynthesis of 2,3-dehydroisoleucine (dIle), 2,3-dehydroaspartic acid (dAsp), and 3,4-dehydroproline (dPro), respectively. While dIle formation by phomYc is indispensable for the installation of dAsp by phomYd, the order of the other PTMs have not been elucidated yet. Most of the biosynthetic enzymes likely have broad substrate specificity, and thus, there might be a metabolic grid from a precursor to phomopsin A. The enzyme(s) responsible for the biosynthesis of 3,4-dehydrovaline (dVal) have also not been identified yet. Finally, phomM acts as an S-adenosylmethionine-dependent alpha-N-methyltransferase that catalyzes two successive N-methylation reactions, converting N-desmethyl-phomopsin A to phomopsin A and phomopsin A further to an N,N-dimethylated congener called phomopsin E. This Diaporthe leptostromiformis (Lupinosis disease fungus) protein is Oligopeptidase PhomG.